Here is a 321-residue protein sequence, read N- to C-terminus: Aspartate carbamoyltransferase catalytic subunit (321 aa).

R65 and T66 together coordinate carbamoyl phosphate. Residue K93 participates in L-aspartate binding. Residues R115, H143, and Q146 each contribute to the carbamoyl phosphate site. Residues R176 and R230 each coordinate L-aspartate. The carbamoyl phosphate site is built by G271 and P272.

This sequence belongs to the aspartate/ornithine carbamoyltransferase superfamily. ATCase family. In terms of assembly, heterododecamer (2C3:3R2) of six catalytic PyrB chains organized as two trimers (C3), and six regulatory PyrI chains organized as three dimers (R2).

The catalysed reaction is carbamoyl phosphate + L-aspartate = N-carbamoyl-L-aspartate + phosphate + H(+). It participates in pyrimidine metabolism; UMP biosynthesis via de novo pathway; (S)-dihydroorotate from bicarbonate: step 2/3. In terms of biological role, catalyzes the condensation of carbamoyl phosphate and aspartate to form carbamoyl aspartate and inorganic phosphate, the committed step in the de novo pyrimidine nucleotide biosynthesis pathway. The chain is Aspartate carbamoyltransferase catalytic subunit from Bartonella henselae (strain ATCC 49882 / DSM 28221 / CCUG 30454 / Houston 1) (Rochalimaea henselae).